Reading from the N-terminus, the 108-residue chain is Signal recognition particle 19 kDa protein (108 aa).

It belongs to the SRP19 family. Part of the signal recognition particle protein translocation system, which is composed of SRP and FtsY. Archaeal SRP consists of a 7S RNA molecule of 300 nucleotides and two protein subunits: SRP54 and SRP19.

The protein resides in the cytoplasm. In terms of biological role, involved in targeting and insertion of nascent membrane proteins into the cytoplasmic membrane. Binds directly to 7S RNA and mediates binding of the 54 kDa subunit of the SRP. This Thermococcus kodakarensis (strain ATCC BAA-918 / JCM 12380 / KOD1) (Pyrococcus kodakaraensis (strain KOD1)) protein is Signal recognition particle 19 kDa protein.